Here is a 165-residue protein sequence, read N- to C-terminus: Ribosome maturation factor RimM (165 aa).

The 72-residue stretch at 92–163 (EARHYWADLE…RVVVDPPEGL (72 aa)) folds into the PRC barrel domain.

The protein belongs to the RimM family. As to quaternary structure, binds ribosomal protein uS19.

The protein resides in the cytoplasm. Its function is as follows. An accessory protein needed during the final step in the assembly of 30S ribosomal subunit, possibly for assembly of the head region. Essential for efficient processing of 16S rRNA. May be needed both before and after RbfA during the maturation of 16S rRNA. It has affinity for free ribosomal 30S subunits but not for 70S ribosomes. The protein is Ribosome maturation factor RimM of Anaeromyxobacter sp. (strain Fw109-5).